We begin with the raw amino-acid sequence, 439 residues long: Mitochondrial distribution and morphology protein 10 (439 aa).

Residues 275-305 (LPDATPPSFQVPSSSSSSSNPVSPSTSQPPT) form a disordered region. A compositionally biased stretch (low complexity) spans 280 to 305 (PPSFQVPSSSSSSSNPVSPSTSQPPT).

This sequence belongs to the MDM10 family. In terms of assembly, component of the ER-mitochondria encounter structure (ERMES) or MDM complex, composed of MMM1, MDM10, MDM12 and MDM34. Associates with the mitochondrial outer membrane sorting assembly machinery SAM(core) complex.

It is found in the mitochondrion outer membrane. Component of the ERMES/MDM complex, which serves as a molecular tether to connect the endoplasmic reticulum and mitochondria. Components of this complex are involved in the control of mitochondrial shape and protein biogenesis and may function in phospholipid exchange. MDM10 is involved in the late assembly steps of the general translocase of the mitochondrial outer membrane (TOM complex). Functions in the TOM40-specific route of the assembly of outer membrane beta-barrel proteins, including the association of TOM40 with the receptor TOM22 and small TOM proteins. Can associate with the SAM(core) complex as well as the MDM12-MMM1 complex, both involved in late steps of the major beta-barrel assembly pathway, that is responsible for biogenesis of all outer membrane beta-barrel proteins. May act as a switch that shuttles between both complexes and channels precursor proteins into the TOM40-specific pathway. Plays a role in mitochondrial morphology and in the inheritance of mitochondria. This chain is Mitochondrial distribution and morphology protein 10, found in Laccaria bicolor (strain S238N-H82 / ATCC MYA-4686) (Bicoloured deceiver).